The sequence spans 1007 residues: Kinesin-like protein KIN-14F (1007 aa).

Residues 41-187 enclose the Calponin-homology (CH) domain; it reads AARRNEAAGW…CVLALKSYGD (147 aa). One can recognise a Kinesin motor domain in the interval 390–715; it reads SIRVYCRVRP…LKFAERVSTV (326 aa). Residue 472–479 participates in ATP binding; sequence GQTGSGKT. A coiled-coil region spans residues 718–748; that stretch reads GAARLNKESGEVKELKEQIARLKSSLAMKDS. Over residues 885 to 904 the composition is skewed to basic and acidic residues; it reads KQYLRNNSRKKDGNEFEQQR. Disordered regions lie at residues 885–924 and 944–1007; these read KQYLRNNSRKKDGNEFEQQRPRFYSTNTDDSDDIDIATSD and SENG…AGTK. Positions 963-1001 are enriched in polar residues; it reads TRTPLHSQIPSASRKTSNGNRSGRQPLSGSDSRRLSSNG.

This sequence belongs to the TRAFAC class myosin-kinesin ATPase superfamily. Kinesin family. KIN-14 subfamily.

This chain is Kinesin-like protein KIN-14F, found in Oryza sativa subsp. japonica (Rice).